Here is a 214-residue protein sequence, read N- to C-terminus: A-type ATP synthase subunit D (214 aa).

This sequence belongs to the V-ATPase D subunit family. Has multiple subunits with at least A(3), B(3), C, D, E, F, H, I and proteolipid K(x).

The protein resides in the cell membrane. In terms of biological role, component of the A-type ATP synthase that produces ATP from ADP in the presence of a proton gradient across the membrane. The polypeptide is A-type ATP synthase subunit D (Pyrococcus abyssi (strain GE5 / Orsay)).